The sequence spans 919 residues: Beta-galactosidase 15 (919 aa).

Positions 1-31 (MAASRGPPLLGFRALALALLLAILLLLGCSA) are cleaved as a signal peptide. A glycan (N-linked (GlcNAc...) asparagine) is linked at Asn-63. The active-site Proton donor is the Glu-220. Glu-289 (nucleophile) is an active-site residue. Asn-412, Asn-530, Asn-546, and Asn-855 each carry an N-linked (GlcNAc...) asparagine glycan. Residues 822 to 907 (NAATPELRLQ…KDLAVEAKCS (86 aa)) enclose the SUEL-type lectin domain.

The protein belongs to the glycosyl hydrolase 35 family.

It localises to the secreted. Its subcellular location is the extracellular space. It is found in the apoplast. The catalysed reaction is Hydrolysis of terminal non-reducing beta-D-galactose residues in beta-D-galactosides.. This Oryza sativa subsp. japonica (Rice) protein is Beta-galactosidase 15.